Reading from the N-terminus, the 583-residue chain is Potassium-transporting ATPase potassium-binding subunit (583 aa).

A run of 10 helical transmembrane segments spans residues 3–23, 66–86, 135–155, 177–197, 266–286, 293–313, 402–422, 440–460, 506–526, and 549–569; these read NIIW…WPLG, MACV…LLMA, GLTV…FALI, VLYI…EQGV, LEML…GAKI, VAIF…TVQA, GLYG…LMVG, AVVV…LMCL, VLLG…ILAM, and LFIF…FFPA.

Belongs to the KdpA family. In terms of assembly, the system is composed of three essential subunits: KdpA, KdpB and KdpC.

The protein resides in the cell inner membrane. Part of the high-affinity ATP-driven potassium transport (or Kdp) system, which catalyzes the hydrolysis of ATP coupled with the electrogenic transport of potassium into the cytoplasm. This subunit binds the periplasmic potassium ions and delivers the ions to the membrane domain of KdpB through an intramembrane tunnel. The polypeptide is Potassium-transporting ATPase potassium-binding subunit (Desulfovibrio desulfuricans (strain ATCC 27774 / DSM 6949 / MB)).